We begin with the raw amino-acid sequence, 228 residues long: MEIEYENEYVHQVYDKIATHFSDTRYKPWPVVEKFLKSLPLGSVGVDIGCGNGKYQKVNPNVYMIGSDRCVKLVKIASNLGPMVISDGLHVPHPSNRFDFALSIAVIHHFSNENRRLQAVQEVLRPLVKGGKALFFVWALEQKNSRRGFSEDGPQDVYVPWILKRQYEYPNAKPEELKGHDPAENIAYQRYYHLFRKGELNELVETAGGSILEHGYDRDNWWVIAEKN.

The protein localises to the cytoplasm. It localises to the nucleus. The catalysed reaction is 5-(carboxymethyl)uridine(34) in tRNA + S-adenosyl-L-methionine = 5-(2-methoxy-2-oxoethyl)uridine(34) in tRNA + S-adenosyl-L-homocysteine. Functionally, required for the methylation of the wobble bases at position 34 in tRNA. Appears to have a role in stress-response. This chain is tRNA (carboxymethyluridine(34)-5-O)-methyltransferase (trm9), found in Schizosaccharomyces pombe (strain 972 / ATCC 24843) (Fission yeast).